Here is a 261-residue protein sequence, read N- to C-terminus: Zinc import ATP-binding protein ZnuC (261 aa).

Residues 6–227 form the ABC transporter domain; sequence IQLNNIHLRF…PEYLKLFGKQ (222 aa). 38–45 lines the ATP pocket; sequence GPNGAGKS.

Belongs to the ABC transporter superfamily. Zinc importer (TC 3.A.1.15.5) family. In terms of assembly, the complex is composed of two ATP-binding proteins (ZnuC), two transmembrane proteins (ZnuB) and a solute-binding protein (ZnuA).

The protein resides in the cell inner membrane. The enzyme catalyses Zn(2+)(out) + ATP(in) + H2O(in) = Zn(2+)(in) + ADP(in) + phosphate(in) + H(+)(in). Its function is as follows. Part of the ABC transporter complex ZnuABC involved in zinc import. Responsible for energy coupling to the transport system. The protein is Zinc import ATP-binding protein ZnuC of Saccharophagus degradans (strain 2-40 / ATCC 43961 / DSM 17024).